The chain runs to 148 residues: Ubiquitin-conjugating enzyme E2-16 kDa (148 aa).

A UBC core domain is found at Ser-2 to Val-148. Ser-12 is modified (phosphoserine). The active-site Glycyl thioester intermediate is the Cys-86. Residue Lys-91 forms a Glycyl lysine isopeptide (Lys-Gly) (interchain with G-Cter in ubiquitin) linkage.

The protein belongs to the ubiquitin-conjugating enzyme family. In terms of assembly, component of the RSP5-UBA1-UBC5 ubiquitin ligase complex composed of E3 RSP5, E1 UBA1 and E2 UBC5. Post-translationally, the N-terminus is blocked.

It carries out the reaction S-ubiquitinyl-[E1 ubiquitin-activating enzyme]-L-cysteine + [E2 ubiquitin-conjugating enzyme]-L-cysteine = [E1 ubiquitin-activating enzyme]-L-cysteine + S-ubiquitinyl-[E2 ubiquitin-conjugating enzyme]-L-cysteine.. Its pathway is protein modification; protein ubiquitination. In terms of biological role, catalyzes the covalent attachment of ubiquitin to other proteins. Mediates the selective degradation of short-lived and abnormal proteins. The RSP5-UBA1-UBC5 ubiquitin ligase complex ubiquitinates RPO21 forming 'Lys-63'-linked polyubiquitin chains. The chain is Ubiquitin-conjugating enzyme E2-16 kDa (UBC5) from Saccharomyces cerevisiae (strain ATCC 204508 / S288c) (Baker's yeast).